The primary structure comprises 188 residues: Shikimate kinase (188 aa).

21-26 provides a ligand contact to ATP; the sequence is GAGKTT. Residue Thr25 coordinates Mg(2+). Positions 43, 67, and 90 each coordinate substrate. Residue Arg130 coordinates ATP. Arg148 lines the substrate pocket.

The protein belongs to the shikimate kinase family. Monomer. The cofactor is Mg(2+).

The protein resides in the cytoplasm. It carries out the reaction shikimate + ATP = 3-phosphoshikimate + ADP + H(+). Its pathway is metabolic intermediate biosynthesis; chorismate biosynthesis; chorismate from D-erythrose 4-phosphate and phosphoenolpyruvate: step 5/7. Functionally, catalyzes the specific phosphorylation of the 3-hydroxyl group of shikimic acid using ATP as a cosubstrate. This chain is Shikimate kinase, found in Geobacillus thermodenitrificans (strain NG80-2).